The following is a 51-amino-acid chain: Large ribosomal subunit protein eL39 (51 aa).

The protein belongs to the eukaryotic ribosomal protein eL39 family.

This is Large ribosomal subunit protein eL39 from Methanosarcina acetivorans (strain ATCC 35395 / DSM 2834 / JCM 12185 / C2A).